Here is a 688-residue protein sequence, read N- to C-terminus: Sodium channel and clathrin linker 1 (688 aa).

N-acetylalanine is present on Ala2. Coiled coils occupy residues 59 to 108 (LIAE…AVEK) and 152 to 673 (QTAS…SVIT). Position 681 is a phosphoserine (Ser681).

Interacts with SCN10A and clathrin. Identified in a complex containing SCN10A, clathrin and SCLT1.

Its subcellular location is the cytoplasm. It is found in the cytoskeleton. The protein resides in the microtubule organizing center. It localises to the centrosome. The protein localises to the centriole. Its function is as follows. Adapter protein that links SCN10A to clathrin. Regulates SCN10A channel activity, possibly by promoting channel internalization. The sequence is that of Sodium channel and clathrin linker 1 (Sclt1) from Mus musculus (Mouse).